The following is a 170-amino-acid chain: Peptide deformylase (170 aa).

Positions 92 and 134 each coordinate Fe cation. Glu135 is a catalytic residue. Position 138 (His138) interacts with Fe cation.

This sequence belongs to the polypeptide deformylase family. The cofactor is Fe(2+).

The enzyme catalyses N-terminal N-formyl-L-methionyl-[peptide] + H2O = N-terminal L-methionyl-[peptide] + formate. Removes the formyl group from the N-terminal Met of newly synthesized proteins. Requires at least a dipeptide for an efficient rate of reaction. N-terminal L-methionine is a prerequisite for activity but the enzyme has broad specificity at other positions. The polypeptide is Peptide deformylase (Chromohalobacter salexigens (strain ATCC BAA-138 / DSM 3043 / CIP 106854 / NCIMB 13768 / 1H11)).